The chain runs to 118 residues: Co-chaperonin GroES (118 aa).

It belongs to the GroES chaperonin family. In terms of assembly, heptamer of 7 subunits arranged in a ring. Interacts with the chaperonin GroEL.

The protein resides in the cytoplasm. In terms of biological role, together with the chaperonin GroEL, plays an essential role in assisting protein folding. The GroEL-GroES system forms a nano-cage that allows encapsulation of the non-native substrate proteins and provides a physical environment optimized to promote and accelerate protein folding. GroES binds to the apical surface of the GroEL ring, thereby capping the opening of the GroEL channel. The sequence is that of Co-chaperonin GroES from Helicobacter pylori (strain HPAG1).